A 76-amino-acid chain; its full sequence is U10-ctenitoxin-Pn1a (76 aa).

Positions 1–15 (SFVFYLFTLITVVRA) are cleaved as a signal peptide. The propeptide occupies 16–36 (EEFILENEAEDIAPAVHGESG). 4 disulfides stabilise this stretch: Cys-39-Cys-54, Cys-46-Cys-59, Cys-53-Cys-73, and Cys-61-Cys-71.

This sequence belongs to the neurotoxin 02 (plectoxin) family. 09 subfamily. As to expression, expressed by the venom gland.

The protein resides in the secreted. This is U10-ctenitoxin-Pn1a from Phoneutria nigriventer (Brazilian armed spider).